The chain runs to 885 residues: Alanine--tRNA ligase (885 aa).

Zn(2+) is bound by residues H569, H573, C672, and H676.

It belongs to the class-II aminoacyl-tRNA synthetase family. Zn(2+) is required as a cofactor.

Its subcellular location is the cytoplasm. It carries out the reaction tRNA(Ala) + L-alanine + ATP = L-alanyl-tRNA(Ala) + AMP + diphosphate. Catalyzes the attachment of alanine to tRNA(Ala) in a two-step reaction: alanine is first activated by ATP to form Ala-AMP and then transferred to the acceptor end of tRNA(Ala). Also edits incorrectly charged Ser-tRNA(Ala) and Gly-tRNA(Ala) via its editing domain. This is Alanine--tRNA ligase from Chlorobaculum tepidum (strain ATCC 49652 / DSM 12025 / NBRC 103806 / TLS) (Chlorobium tepidum).